The sequence spans 266 residues: Ribonuclease 3 (266 aa).

An RNase III domain is found at I34 to G158. Mg(2+) is bound at residue E72. D76 is a catalytic residue. 2 residues coordinate Mg(2+): D144 and E147. E147 is a catalytic residue. In terms of domain architecture, DRBM spans N185 to N254.

The protein belongs to the ribonuclease III family. In terms of assembly, homodimer. Mg(2+) is required as a cofactor.

It is found in the cytoplasm. It catalyses the reaction Endonucleolytic cleavage to 5'-phosphomonoester.. Its function is as follows. Digests double-stranded RNA. Involved in the processing of primary rRNA transcript to yield the immediate precursors to the large and small rRNAs (23S and 16S). Processes some mRNAs, and tRNAs when they are encoded in the rRNA operon. Processes pre-crRNA and tracrRNA of type II CRISPR loci if present in the organism. This Rhodopirellula baltica (strain DSM 10527 / NCIMB 13988 / SH1) protein is Ribonuclease 3.